A 327-amino-acid polypeptide reads, in one-letter code: Germination protease (327 aa).

The propeptide occupies 1–7; sequence MNSVRTD.

Belongs to the peptidase A25 family. As to quaternary structure, homotetramer. Post-translationally, autoproteolytically processed. The inactive tetrameric zymogen termed p46 autoprocesses to a smaller form termed p41, which is active only during spore germination.

The enzyme catalyses Endopeptidase action with P4 Glu or Asp, P1 preferably Glu &gt; Asp, P1' hydrophobic and P2' Ala.. Functionally, initiates the rapid degradation of small, acid-soluble proteins during spore germination. This Clostridium acetobutylicum (strain ATCC 824 / DSM 792 / JCM 1419 / IAM 19013 / LMG 5710 / NBRC 13948 / NRRL B-527 / VKM B-1787 / 2291 / W) protein is Germination protease.